The primary structure comprises 347 residues: Ryncolin-2 (347 aa).

An N-terminal signal peptide occupies residues 1–19 (MKPWAAFHLIFLVASSLEG). The segment at 49–115 (LQSQPGIPGI…DKGDKGDKGD (67 aa)) is disordered. In terms of domain architecture, Collagen-like spans 57 to 114 (GIPGVPGINGSEGLKGDPGPQGLPGETGFDGIPGVAGPKGDKGDQGDKGDKGDKGDKG). The span at 95-115 (KGDKGDQGDKGDKGDKGDKGD) shows a compositional bias: basic and acidic residues. Positions 121 to 341 (DCPPTDVEVR…YADMKIRPQQ (221 aa)) constitute a Fibrinogen C-terminal domain. 2 disulfide bridges follow: cysteine 132-cysteine 160 and cysteine 284-cysteine 297.

The protein belongs to the ficolin lectin family. Veficolin subfamily. Hydroxylated, possibly at Pro-74 and Pro-94. In terms of tissue distribution, expressed by the venom duct.

The protein resides in the secreted. Initiates complement activation and/or interferes in platelet aggregation and/or blood coagulation. This Cerberus rynchops (Dog-faced water snake) protein is Ryncolin-2.